Consider the following 350-residue polypeptide: Putative D-xylulose reductase (350 aa).

Positions 43, 68, and 154 each coordinate Zn(2+).

This sequence belongs to the zinc-containing alcohol dehydrogenase family. It depends on Zn(2+) as a cofactor.

It carries out the reaction xylitol + NAD(+) = D-xylulose + NADH + H(+). The protein is Putative D-xylulose reductase of Agrobacterium fabrum (strain C58 / ATCC 33970) (Agrobacterium tumefaciens (strain C58)).